The primary structure comprises 707 residues: GDNF-inducible zinc finger protein 1 (707 aa).

The 73-residue stretch at 31-103 folds into the BTB domain; the sequence is CDVTVIVDYQ…VYTARVRVKE (73 aa). Residues 149–165 show a composition bias toward polar residues; that stretch reads VEASSGPQVSVTPSSKA. Disordered regions lie at residues 149–221 and 243–309; these read VEAS…PKIR and RRLR…KDGE. 3 stretches are compositionally biased toward basic and acidic residues: residues 198 to 213, 243 to 278, and 287 to 298; these read PSKK…KDVA, RRLR…EPAS, and VEREESLQKVEG. 10 consecutive C2H2-type zinc fingers follow at residues 316–338, 347–370, 376–399, 406–428, 434–456, 462–484, 490–512, 518–540, 546–568, and 574–596; these read FQCT…IKYH, YRCD…RHVH, FPCE…LQVH, HRCG…ERTH, YGCT…LRVH, FVCD…KRCH, FMCE…NRIH, FKCE…IKVH, YCCD…HRIH, and YMCN…TSIH. At S612 the chain carries Phosphoserine.

It belongs to the krueppel C2H2-type zinc-finger protein family. Interacts with NCL.

It is found in the cytoplasm. The protein resides in the nucleus. It localises to the nucleoplasm. Its subcellular location is the nucleolus. Transcriptional repressor that binds the GZF1 responsive element (GRE) (consensus: 5'-TGCGCN[TG][CA]TATA-3'). May be regulating VSX2/HOX10 expression. The chain is GDNF-inducible zinc finger protein 1 (Gzf1) from Rattus norvegicus (Rat).